A 987-amino-acid polypeptide reads, in one-letter code: Eukaryotic translation initiation factor 3 subunit A (987 aa).

The stretch at 93 to 122 (LHLATDKAEQARSQADALEEALDVDDLEAD) forms a coiled coil. One can recognise a PCI domain in the interval 316 to 513 (LQLIASSVVL…GVVIFGNLGI (198 aa)). Coiled coils occupy residues 556–742 (TVEK…EKNR) and 797–858 (LKIE…REEL). Residues 808-859 (QEEEEARKQEEAERLKKVEAERKANLDKAFEKQRQREIELEEKSRREREELL) show a composition bias toward basic and acidic residues. Residues 808 to 987 (QEEEEARKQE…GSSRPRPTQR (180 aa)) are disordered. A compositionally biased stretch (low complexity) spans 872–894 (PTVTPVGTTAPAAAAAAAGAPAA). Polar residues-rich tracts occupy residues 905–916 (TEVSGPSAPTSS) and 976–987 (TFGSSRPRPTQR).

Belongs to the eIF-3 subunit A family. Component of the eukaryotic translation initiation factor 3 (eIF-3) complex. Binds to the translation initiation factor TIF3H1.

The protein resides in the cytoplasm. RNA-binding component of the eukaryotic translation initiation factor 3 (eIF-3) complex, which is involved in protein synthesis of a specialized repertoire of mRNAs and, together with other initiation factors, stimulates binding of mRNA and methionyl-tRNAi to the 40S ribosome. The eIF-3 complex specifically targets and initiates translation of a subset of mRNAs involved in cell proliferation. The chain is Eukaryotic translation initiation factor 3 subunit A (TIF3A1) from Arabidopsis thaliana (Mouse-ear cress).